Consider the following 586-residue polypeptide: RNA-directed RNA polymerase subunit beta (586 aa).

Residues 259–391 (VRAYSGSCSN…TNEKKTFFDG (133 aa)) form the RdRp catalytic domain. Mg(2+)-binding residues include D274, D359, and D360.

In terms of assembly, homodimer; the replicase complex can dimerize. Part of the viral RNA-dependent RNA polymerase complex, the other subunits are the host ribosomal protein S1, EF-Tu and EF-Ts. S1 is needed for the initiation of genomic RNA (+)-strand replication. It depends on Mg(2+) as a cofactor.

It catalyses the reaction RNA(n) + a ribonucleoside 5'-triphosphate = RNA(n+1) + diphosphate. In terms of biological role, this is the catalytic subunit of the viral RNA-dependent RNA polymerase complex. This complex is involved in viral RNA replication that produces (+)-stranded genomes via a complementary, (-)-stranded intermediate. Binds RNA cooperatively with the host ribosomal protein S1. This is RNA-directed RNA polymerase subunit beta from Escherichia coli.